The following is a 228-amino-acid chain: Aquaporin Z (228 aa).

A run of 2 helical transmembrane segments spans residues 1-21 (MLNK…GGCG) and 23-43 (AILA…ALAF). The short motif at 63–65 (NPA) is the NPA 1 element. The next 3 membrane-spanning stretches (helical) occupy residues 82-102 (IPYW…LYVI), 129-149 (MMAG…IILG), and 154-174 (LAPA…IHLV). Positions 184 to 186 (NPA) match the NPA 2 motif. The helical transmembrane segment at 205-225 (LFWVAPLVGAVIGAIIWKGLL) threads the bilayer.

The protein belongs to the MIP/aquaporin (TC 1.A.8) family. In terms of assembly, homotetramer.

It localises to the cell inner membrane. The enzyme catalyses H2O(in) = H2O(out). Functionally, channel that permits osmotically driven movement of water in both directions. It is involved in the osmoregulation and in the maintenance of cell turgor during volume expansion in rapidly growing cells. It mediates rapid entry or exit of water in response to abrupt changes in osmolarity. The sequence is that of Aquaporin Z from Brucella abortus biovar 1 (strain 9-941).